Reading from the N-terminus, the 387-residue chain is MSYRMFDYLVPNVNFFGPNAISVVGERCQLLGGKKALLVTDKGLRAIKDGAVDKTLHYLREAGIEVAIFDGVEPNPKDTNVRDGLAVFRREQCDIIVTVGGGSPHDCGKGIGIAATHEGDLYQYAGIETLTNPLPPIVAVNTTAGTASEVTRHCVLTNTETKVKFVIVSWRNLPSVSINDPLLMIGKPAALTAATGMDALTHAVEAYISKDANPVTDAAAMQAIRLIARNLRQAVALGSNLQARENMAYASLLAGMAFNNANLGYVHAMAHQLGGLYDMPHGVANAVLLPHVARYNLIANPEKFADIAELMGENITGLSTLDAAEKAIAAITRLSMDIGIPQHLRDLGVKEADFPYMAEMALKDGNAFSNPRKGNEQEIAAIFRQAF.

The protein belongs to the iron-containing alcohol dehydrogenase family. As to quaternary structure, homooctamer. Fe cation serves as cofactor.

It carries out the reaction propane-1,3-diol + NAD(+) = 3-hydroxypropanal + NADH + H(+). This chain is 1,3-propanediol dehydrogenase (dhaT), found in Klebsiella pneumoniae.